The chain runs to 185 residues: Flavodoxin (185 aa).

One can recognise a Flavodoxin-like domain in the interval 4–159 (VLVIYDTRTG…ACRRLGRRLA (156 aa)).

Belongs to the flavodoxin family. FMN serves as cofactor.

In terms of biological role, low-potential electron donor to a number of redox enzymes. The sequence is that of Flavodoxin (fldA) from Aquifex aeolicus (strain VF5).